A 433-amino-acid chain; its full sequence is Phosphomethylpyrimidine synthase (433 aa).

Residues asparagine 69, methionine 98, tyrosine 127, histidine 163, 185-187 (SRG), 226-229 (DACR), and glutamate 265 contribute to the substrate site. Histidine 269 provides a ligand contact to Zn(2+). Tyrosine 292 serves as a coordination point for substrate. Histidine 333 lines the Zn(2+) pocket. Residues cysteine 409, cysteine 412, and cysteine 416 each coordinate [4Fe-4S] cluster.

Belongs to the ThiC family. The cofactor is [4Fe-4S] cluster.

The catalysed reaction is 5-amino-1-(5-phospho-beta-D-ribosyl)imidazole + S-adenosyl-L-methionine = 4-amino-2-methyl-5-(phosphooxymethyl)pyrimidine + CO + 5'-deoxyadenosine + formate + L-methionine + 3 H(+). The protein operates within cofactor biosynthesis; thiamine diphosphate biosynthesis. In terms of biological role, catalyzes the synthesis of the hydroxymethylpyrimidine phosphate (HMP-P) moiety of thiamine from aminoimidazole ribotide (AIR) in a radical S-adenosyl-L-methionine (SAM)-dependent reaction. This Clostridioides difficile (strain 630) (Peptoclostridium difficile) protein is Phosphomethylpyrimidine synthase.